Consider the following 143-residue polypeptide: Peptide methionine sulfoxide reductase MsrB (143 aa).

One can recognise a MsrB domain in the interval 16–139 (DAELRRRLTP…NSAALNFESR (124 aa)). Residues Cys55, Cys58, Cys104, and Cys107 each contribute to the Zn(2+) site. The active-site Nucleophile is Cys128.

It belongs to the MsrB Met sulfoxide reductase family. The cofactor is Zn(2+).

It carries out the reaction L-methionyl-[protein] + [thioredoxin]-disulfide + H2O = L-methionyl-(R)-S-oxide-[protein] + [thioredoxin]-dithiol. The protein is Peptide methionine sulfoxide reductase MsrB of Burkholderia multivorans (strain ATCC 17616 / 249).